We begin with the raw amino-acid sequence, 408 residues long: Dual-specificity RNA methyltransferase RlmN (408 aa).

E126 functions as the Proton acceptor in the catalytic mechanism. Residues 132–373 enclose the Radical SAM core domain; it reads EEGRGTLCLS…NQAGYASPIR (242 aa). C139 and C384 are joined by a disulfide. C146, C150, and C153 together coordinate [4Fe-4S] cluster. Residues 210–211, S242, 264–266, and N341 contribute to the S-adenosyl-L-methionine site; these read GE and SLH. The S-methylcysteine intermediate role is filled by C384.

Belongs to the radical SAM superfamily. RlmN family. The cofactor is [4Fe-4S] cluster.

The protein localises to the cytoplasm. The catalysed reaction is adenosine(2503) in 23S rRNA + 2 reduced [2Fe-2S]-[ferredoxin] + 2 S-adenosyl-L-methionine = 2-methyladenosine(2503) in 23S rRNA + 5'-deoxyadenosine + L-methionine + 2 oxidized [2Fe-2S]-[ferredoxin] + S-adenosyl-L-homocysteine. The enzyme catalyses adenosine(37) in tRNA + 2 reduced [2Fe-2S]-[ferredoxin] + 2 S-adenosyl-L-methionine = 2-methyladenosine(37) in tRNA + 5'-deoxyadenosine + L-methionine + 2 oxidized [2Fe-2S]-[ferredoxin] + S-adenosyl-L-homocysteine. Its function is as follows. Specifically methylates position 2 of adenine 2503 in 23S rRNA and position 2 of adenine 37 in tRNAs. m2A2503 modification seems to play a crucial role in the proofreading step occurring at the peptidyl transferase center and thus would serve to optimize ribosomal fidelity. The protein is Dual-specificity RNA methyltransferase RlmN of Bartonella henselae (strain ATCC 49882 / DSM 28221 / CCUG 30454 / Houston 1) (Rochalimaea henselae).